Here is a 302-residue protein sequence, read N- to C-terminus: Urease accessory protein UreD 1 (302 aa).

It belongs to the UreD family. As to quaternary structure, ureD, UreF and UreG form a complex that acts as a GTP-hydrolysis-dependent molecular chaperone, activating the urease apoprotein by helping to assemble the nickel containing metallocenter of UreC. The UreE protein probably delivers the nickel.

It localises to the cytoplasm. Required for maturation of urease via the functional incorporation of the urease nickel metallocenter. In Psychrobacter cryohalolentis (strain ATCC BAA-1226 / DSM 17306 / VKM B-2378 / K5), this protein is Urease accessory protein UreD 1.